The chain runs to 251 residues: NADPH-dependent oxidoreductase (251 aa).

This sequence belongs to the flavin oxidoreductase frp family. The cofactor is FMN.

Its function is as follows. Reduces FMN, organic nitro compounds and disulfide DTNB. Involved in maintenance of the cellular redox state and the disulfide stress response. This chain is NADPH-dependent oxidoreductase (nfrA), found in Staphylococcus aureus (strain bovine RF122 / ET3-1).